Reading from the N-terminus, the 589-residue chain is C-type lectin domain family 4 member F (589 aa).

Residues 1–39 lie on the Cytoplasmic side of the membrane; sequence MDGEAVRFCTDNQCVSLHPQEVDSVAMAPAAPKIPRLVQ. The helical; Signal-anchor for type II membrane protein transmembrane segment at 40–60 threads the bilayer; it reads ATPAFMAVTLVFSLVTLFVVV. Residues 61-589 lie on the Extracellular side of the membrane; that stretch reads QQQTRPVPKP…TPPCPWILSN (529 aa). N79, N113, N207, N230, N244, N312, N385, and N399 each carry an N-linked (GlcNAc...) asparagine glycan. The C-type lectin domain maps to 476-589; it reads NGGSLYYFSS…TPPCPWILSN (114 aa).

It localises to the membrane. Receptor with an affinity for galactose and fucose. Could be involved in endocytosis. The chain is C-type lectin domain family 4 member F (CLEC4F) from Homo sapiens (Human).